The chain runs to 361 residues: tRNA-specific 2-thiouridylase MnmA (361 aa).

ATP-binding positions include 6–13 (AMSGGVDS) and leucine 32. The Nucleophile role is filled by cysteine 101. Cysteine 101 and cysteine 194 are oxidised to a cystine. Glycine 125 provides a ligand contact to ATP. Residues 144-146 (KDQ) are interaction with tRNA. Cysteine 194 acts as the Cysteine persulfide intermediate in catalysis.

Belongs to the MnmA/TRMU family.

It is found in the cytoplasm. It catalyses the reaction S-sulfanyl-L-cysteinyl-[protein] + uridine(34) in tRNA + AH2 + ATP = 2-thiouridine(34) in tRNA + L-cysteinyl-[protein] + A + AMP + diphosphate + H(+). Functionally, catalyzes the 2-thiolation of uridine at the wobble position (U34) of tRNA, leading to the formation of s(2)U34. The polypeptide is tRNA-specific 2-thiouridylase MnmA (Corynebacterium aurimucosum (strain ATCC 700975 / DSM 44827 / CIP 107346 / CN-1) (Corynebacterium nigricans)).